Consider the following 42-residue polypeptide: Photosystem II reaction center protein J (42 aa).

Residues I10–F30 form a helical membrane-spanning segment.

This sequence belongs to the PsbJ family. PSII is composed of 1 copy each of membrane proteins PsbA, PsbB, PsbC, PsbD, PsbE, PsbF, PsbH, PsbI, PsbJ, PsbK, PsbL, PsbM, PsbT, PsbX, PsbY, PsbZ, Psb30/Ycf12, at least 3 peripheral proteins of the oxygen-evolving complex and a large number of cofactors. It forms dimeric complexes.

It localises to the plastid. Its subcellular location is the chloroplast thylakoid membrane. Functionally, one of the components of the core complex of photosystem II (PSII). PSII is a light-driven water:plastoquinone oxidoreductase that uses light energy to abstract electrons from H(2)O, generating O(2) and a proton gradient subsequently used for ATP formation. It consists of a core antenna complex that captures photons, and an electron transfer chain that converts photonic excitation into a charge separation. The protein is Photosystem II reaction center protein J of Oltmannsiellopsis viridis (Marine flagellate).